A 94-amino-acid chain; its full sequence is MSDAHMETVHVIVKGKVQGVGYRHAAVRRAHMLGVTGWVQNLPDGTVEAVVQGTADQVDHMLEWLRRGPPAAQVRELASERSFEEKRYKHFAQL.

Positions 8 to 94 (TVHVIVKGKV…EKRYKHFAQL (87 aa)) constitute an Acylphosphatase-like domain. Catalysis depends on residues R23 and N41.

It belongs to the acylphosphatase family.

It catalyses the reaction an acyl phosphate + H2O = a carboxylate + phosphate + H(+). The chain is Acylphosphatase (acyP) from Bordetella parapertussis (strain 12822 / ATCC BAA-587 / NCTC 13253).